The chain runs to 737 residues: NAD(P)H-quinone oxidoreductase subunit 5, chloroplastic (737 aa).

Transmembrane regions (helical) follow at residues 9-29, 40-60, 89-109, 125-145, 147-167, 185-205, 219-239, 258-278, 286-306, 327-347, 354-374, 396-416, 425-445, 543-563, 602-622, and 717-737; these read WIIP…LILF, WAFQ…YLSI, IDPL…MVLI, FAYM…SNLI, IYIF…FWFT, GDFG…SFEF, NELN…GAVA, TPIS…FLVA, VIPY…LLGA, LGYM…FHLI, ALLF…VGYS, ITFL…CFWS, WLYS…TAFY, LFPI…GIPF, VVSV…YKPI, and SYLF…YLLF.

Belongs to the complex I subunit 5 family. As to quaternary structure, NDH is composed of at least 16 different subunits, 5 of which are encoded in the nucleus.

The protein localises to the plastid. It is found in the chloroplast thylakoid membrane. It catalyses the reaction a plastoquinone + NADH + (n+1) H(+)(in) = a plastoquinol + NAD(+) + n H(+)(out). It carries out the reaction a plastoquinone + NADPH + (n+1) H(+)(in) = a plastoquinol + NADP(+) + n H(+)(out). Its function is as follows. NDH shuttles electrons from NAD(P)H:plastoquinone, via FMN and iron-sulfur (Fe-S) centers, to quinones in the photosynthetic chain and possibly in a chloroplast respiratory chain. The immediate electron acceptor for the enzyme in this species is believed to be plastoquinone. Couples the redox reaction to proton translocation, and thus conserves the redox energy in a proton gradient. This is NAD(P)H-quinone oxidoreductase subunit 5, chloroplastic (ndhF) from Solanum lycopersicum (Tomato).